The following is a 320-amino-acid chain: Phospho-N-acetylmuramoyl-pentapeptide-transferase (320 aa).

9 consecutive transmembrane segments (helical) span residues 5 to 25 (LWAL…LIKF), 51 to 71 (MGGL…GAAY), 76 to 96 (GVVA…IGGI), 124 to 144 (VVIM…IPMI), 145 to 165 (GTIN…VGWS), 176 to 196 (GLLA…AMHM), 198 to 218 (NHII…FLIF), 233 to 255 (LALG…LIWF), and 298 to 318 (WQID…GIFY).

It belongs to the glycosyltransferase 4 family. MraY subfamily. It depends on Mg(2+) as a cofactor.

Its subcellular location is the cell membrane. The catalysed reaction is UDP-N-acetyl-alpha-D-muramoyl-L-alanyl-gamma-D-glutamyl-L-lysyl-D-alanyl-D-alanine + di-trans,octa-cis-undecaprenyl phosphate = Mur2Ac(oyl-L-Ala-gamma-D-Glu-L-Lys-D-Ala-D-Ala)-di-trans,octa-cis-undecaprenyl diphosphate + UMP. It functions in the pathway cell wall biogenesis; peptidoglycan biosynthesis. Functionally, catalyzes the initial step of the lipid cycle reactions in the biosynthesis of the cell wall peptidoglycan: transfers peptidoglycan precursor phospho-MurNAc-pentapeptide from UDP-MurNAc-pentapeptide onto the lipid carrier undecaprenyl phosphate, yielding undecaprenyl-pyrophosphoryl-MurNAc-pentapeptide, known as lipid I. The chain is Phospho-N-acetylmuramoyl-pentapeptide-transferase from Leuconostoc citreum (strain KM20).